A 298-amino-acid chain; its full sequence is MNKAYMYMNKLRAYFIYSKPQVWWLLVFIGLIGSILAINSFKSYLIILLLVALVANMTGSMGAEGLTNYIDRDMDSIMERTRNRPLPSGEISEKGAFLFGIILSLFSIFILLIFKRYLAALFMFLGLFDNVFIYSYLLKRRTPYSIILGGFSGAFPVLIGWYTVTDRFSWIPFILFFLVMFWIPVHVWSLAYKYRDDYYRAGVPMLPVVYSDRKTAVSISLSSMLLILFSVIPYFLGFFNYLYLLVILILSVPIVIYSVNFIKKPTKKASMRLFIYTAPYLTFVFFIVMIIHIIEIIK.

9 consecutive transmembrane segments (helical) span residues 21–41 (QVWWLLVFIGLIGSILAINSF), 43–63 (SYLIILLLVALVANMTGSMGA), 94–114 (KGAFLFGIILSLFSIFILLIF), 118–138 (LAALFMFLGLFDNVFIYSYLL), 144–164 (YSIILGGFSGAFPVLIGWYTV), 168–188 (FSWIPFILFFLVMFWIPVHVW), 215–235 (TAVSISLSSMLLILFSVIPYF), 236–256 (LGFFNYLYLLVILILSVPIVI), and 274–294 (FIYTAPYLTFVFFIVMIIHII).

Belongs to the UbiA prenyltransferase family. Protoheme IX farnesyltransferase subfamily.

It localises to the cell membrane. The catalysed reaction is heme b + (2E,6E)-farnesyl diphosphate + H2O = Fe(II)-heme o + diphosphate. It functions in the pathway porphyrin-containing compound metabolism; heme O biosynthesis; heme O from protoheme: step 1/1. In terms of biological role, converts heme B (protoheme IX) to heme O by substitution of the vinyl group on carbon 2 of heme B porphyrin ring with a hydroxyethyl farnesyl side group. The protein is Protoheme IX farnesyltransferase 1 of Picrophilus torridus (strain ATCC 700027 / DSM 9790 / JCM 10055 / NBRC 100828 / KAW 2/3).